A 631-amino-acid polypeptide reads, in one-letter code: Golgin subfamily A member 8R (631 aa).

The segment at 1-72 (MAEETQHNKL…REGPTSSATL (72 aa)) is disordered. Residues 38–50 (TNGSIPETATSGG) show a composition bias toward polar residues. Coiled coils occupy residues 85–149 (VLDS…NTDL), 209–247 (ELEQ…HIEG), and 303–419 (SEVE…LSLM). Disordered stretches follow at residues 422-451 (PGEG…DPES), 502-523 (AKDA…DEGE), and 551-610 (NSAD…QEHP). The segment covering 507 to 519 (LGGGHHQAGAQGG) has biased composition (gly residues). The segment covering 568-577 (AADKHGDLRE) has biased composition (basic and acidic residues).

The protein belongs to the GOLGA8 family.

The sequence is that of Golgin subfamily A member 8R from Homo sapiens (Human).